Consider the following 256-residue polypeptide: Fat body protein 2 (256 aa).

10-34 (VYVGSFSGIGWQMMMQLMQKDIKMM) lines the NAD(+) pocket. Ser138 contacts substrate. Residue Tyr151 is the Proton acceptor of the active site.

It belongs to the short-chain dehydrogenases/reductases (SDR) family.

In Drosophila melanogaster (Fruit fly), this protein is Fat body protein 2 (Fbp2).